The following is a 485-amino-acid chain: Glutamate--tRNA ligase (485 aa).

The 'HIGH' region motif lies at 11–21 (PSPTGHLHIGG). A 'KMSKS' region motif is present at residues 252–256 (KMSKR). An ATP-binding site is contributed by lysine 255.

Belongs to the class-I aminoacyl-tRNA synthetase family. Glutamate--tRNA ligase type 1 subfamily. As to quaternary structure, monomer.

Its subcellular location is the cytoplasm. It catalyses the reaction tRNA(Glu) + L-glutamate + ATP = L-glutamyl-tRNA(Glu) + AMP + diphosphate. Functionally, catalyzes the attachment of glutamate to tRNA(Glu) in a two-step reaction: glutamate is first activated by ATP to form Glu-AMP and then transferred to the acceptor end of tRNA(Glu). The chain is Glutamate--tRNA ligase from Halalkalibacterium halodurans (strain ATCC BAA-125 / DSM 18197 / FERM 7344 / JCM 9153 / C-125) (Bacillus halodurans).